A 155-amino-acid chain; its full sequence is Protein-export protein SecB (155 aa).

It belongs to the SecB family. Homotetramer, a dimer of dimers. One homotetramer interacts with 1 SecA dimer.

It is found in the cytoplasm. Its function is as follows. One of the proteins required for the normal export of preproteins out of the cell cytoplasm. It is a molecular chaperone that binds to a subset of precursor proteins, maintaining them in a translocation-competent state. It also specifically binds to its receptor SecA. This chain is Protein-export protein SecB, found in Albidiferax ferrireducens (strain ATCC BAA-621 / DSM 15236 / T118) (Rhodoferax ferrireducens).